Here is a 467-residue protein sequence, read N- to C-terminus: L-seryl-tRNA(Sec) selenium transferase (467 aa).

At Lys298 the chain carries N6-(pyridoxal phosphate)lysine.

Belongs to the SelA family. Requires pyridoxal 5'-phosphate as cofactor.

Its subcellular location is the cytoplasm. It carries out the reaction L-seryl-tRNA(Sec) + selenophosphate + H(+) = L-selenocysteinyl-tRNA(Sec) + phosphate. The protein operates within aminoacyl-tRNA biosynthesis; selenocysteinyl-tRNA(Sec) biosynthesis; selenocysteinyl-tRNA(Sec) from L-seryl-tRNA(Sec) (bacterial route): step 1/1. Functionally, converts seryl-tRNA(Sec) to selenocysteinyl-tRNA(Sec) required for selenoprotein biosynthesis. This chain is L-seryl-tRNA(Sec) selenium transferase, found in Alkaliphilus oremlandii (strain OhILAs) (Clostridium oremlandii (strain OhILAs)).